A 494-amino-acid polypeptide reads, in one-letter code: Voltage-gated potassium channel regulatory subunit KCNF1 (494 aa).

The Cytoplasmic portion of the chain corresponds to 1–183 (MDGSGERSLP…KPESSCPARV (183 aa)). The helical transmembrane segment at 184–204 (VAVLSFLLILVSSVVMCMGTI) threads the bilayer. The helical transmembrane segment at 224–244 (NVETACIGWFTLEYLLRLFSS) threads the bilayer. Over 245–249 (PNKLH) the chain is Cytoplasmic. The chain crosses the membrane as a helical span at residues 250-270 (FALSFMNIVDVLAILPFYVSL). The helical; Voltage-sensor transmembrane segment at 290–310 (QALRIMRIARIFKLARHSSGL) threads the bilayer. Residues 311–324 (QTLTYALKRSFKEL) are Cytoplasmic-facing. A helical membrane pass occupies residues 325–345 (GLLLMYLAVGIFVFSALGYTM). The segment at residues 358–378 (PQSFWWAIITMTTVGYGDIYP) is an intramembrane region (pore-forming). A Selectivity filter motif is present at residues 370-375 (TVGYGD). The chain crosses the membrane as a helical span at residues 386-406 (NAAISFLCGVIAIALPIHPII). Residues 407-494 (NNFVRYYNKQ…HHRTRLQSCK (88 aa)) are Cytoplasmic-facing. Positions 433–469 (NSSSGGEGKTGGSRSDLDNLPPEPAGKEAPSCSSRLK) are disordered.

This sequence belongs to the potassium channel family. F (TC 1.A.1.2) subfamily. Kv5.1/KCNF1 sub-subfamily. As to quaternary structure, heterotetramer with KCNB1 or KCNB2. As to expression, detected in heart, brain, liver, skeletal muscle, kidney and pancreas.

The protein localises to the cell membrane. Regulatory alpha-subunit of the voltage-gated potassium (Kv) channel which, when coassembled with KCNB1 or KCNB2, can modulate their expression and their gating kinetics by acting on deactivation upon repolarization and inactivation during maintained depolarization. Accelerates inactivation but has relatively little effect on deactivation. Coexpression with KCNB1 or KCNB2 markedly slows inactivation. Each modulatory subunit has its own specific properties of regulation, and can lead to extensive inhibitions, to large changes in kinetics, and/or to large shifts in the voltage dependencies of the inactivation process. The gating kinetics depends on the nature and stoichiometry of the associated regulatory sunbunit. Fails to produce a potassium current when expressed alone. This is Voltage-gated potassium channel regulatory subunit KCNF1 from Homo sapiens (Human).